Reading from the N-terminus, the 241-residue chain is Uridylate kinase (241 aa).

15-18 contacts ATP; sequence KLSG. An involved in allosteric activation by GTP region spans residues 23-28; it reads GSEGFG. Gly57 contacts UMP. ATP is bound by residues Gly58 and Arg62. Residues Asp77 and 138–145 contribute to the UMP site; that span reads TGNPFFTT. Residues Thr165, Phe171, and Asp174 each contribute to the ATP site.

Belongs to the UMP kinase family. As to quaternary structure, homohexamer.

It is found in the cytoplasm. The catalysed reaction is UMP + ATP = UDP + ADP. It participates in pyrimidine metabolism; CTP biosynthesis via de novo pathway; UDP from UMP (UMPK route): step 1/1. Its activity is regulated as follows. Allosterically activated by GTP. Inhibited by UTP. Functionally, catalyzes the reversible phosphorylation of UMP to UDP. The polypeptide is Uridylate kinase (Vibrio vulnificus (strain CMCP6)).